We begin with the raw amino-acid sequence, 312 residues long: Protoheme IX farnesyltransferase (312 aa).

The next 9 helical transmembrane spans lie at 29-49 (VMSL…GHMN), 50-70 (PVLA…SGAL), 90-110 (IPAG…LSAF), 117-137 (LMVN…YAVV), 150-170 (IVIG…AATG), 177-197 (VVLF…LSLF), 223-243 (ALFY…LGFA), 248-268 (GAIS…MWVA), and 292-312 (LFAV…FGGF).

It belongs to the UbiA prenyltransferase family. Protoheme IX farnesyltransferase subfamily.

It is found in the cell inner membrane. The enzyme catalyses heme b + (2E,6E)-farnesyl diphosphate + H2O = Fe(II)-heme o + diphosphate. The protein operates within porphyrin-containing compound metabolism; heme O biosynthesis; heme O from protoheme: step 1/1. Its function is as follows. Converts heme B (protoheme IX) to heme O by substitution of the vinyl group on carbon 2 of heme B porphyrin ring with a hydroxyethyl farnesyl side group. The chain is Protoheme IX farnesyltransferase from Brucella anthropi (strain ATCC 49188 / DSM 6882 / CCUG 24695 / JCM 21032 / LMG 3331 / NBRC 15819 / NCTC 12168 / Alc 37) (Ochrobactrum anthropi).